Consider the following 361-residue polypeptide: GTP 3',8-cyclase (361 aa).

A disordered region spans residues 1 to 30 (MTVTALGLPTVARSTGDGSAGASPAPADGP). Residues 16 to 30 (GDGSAGASPAPADGP) show a composition bias toward low complexity. Residues 34–252 (TYGRAATDLR…LQQHFELTPD (219 aa)) form the Radical SAM core domain. R43 contributes to the GTP binding site. Residues C50 and C54 each contribute to the [4Fe-4S] cluster site. Y56 contributes to the S-adenosyl-L-methionine binding site. C57 contacts [4Fe-4S] cluster. Residue R94 participates in GTP binding. G98 is an S-adenosyl-L-methionine binding site. T125 contacts GTP. S149 provides a ligand contact to S-adenosyl-L-methionine. K186 is a GTP binding site. Residue M220 participates in S-adenosyl-L-methionine binding. Positions 288 and 291 each coordinate [4Fe-4S] cluster. 293–295 (RTR) lines the GTP pocket. C305 serves as a coordination point for [4Fe-4S] cluster.

This sequence belongs to the radical SAM superfamily. MoaA family. In terms of assembly, monomer and homodimer. The cofactor is [4Fe-4S] cluster.

It carries out the reaction GTP + AH2 + S-adenosyl-L-methionine = (8S)-3',8-cyclo-7,8-dihydroguanosine 5'-triphosphate + 5'-deoxyadenosine + L-methionine + A + H(+). It functions in the pathway cofactor biosynthesis; molybdopterin biosynthesis. Catalyzes the cyclization of GTP to (8S)-3',8-cyclo-7,8-dihydroguanosine 5'-triphosphate. The protein is GTP 3',8-cyclase of Mycolicibacterium smegmatis (strain ATCC 700084 / mc(2)155) (Mycobacterium smegmatis).